Here is a 347-residue protein sequence, read N- to C-terminus: Beta carbonic anhydrase 1, chloroplastic (347 aa).

Residues 1-113 (MSTAPLSGFF…AAAKVEQITA (113 aa)) constitute a chloroplast transit peptide. Residue A114 is modified to N-acetylalanine. S175 bears the Phosphoserine mark. Position 203 is a phosphotyrosine (Y203). S266 carries the post-translational modification Phosphoserine. At C280 the chain carries S-nitrosocysteine.

It belongs to the beta-class carbonic anhydrase family. As to quaternary structure, homohexamer. In terms of processing, S-nitrosylation at Cys-280 is up-regulated during nitrosative burst and suppresses both binding of salicylic acid and carbonic anhydrase activity. S-nitrosylated in response to an avirulent but not to a virulent bacterial strain. In terms of tissue distribution, strongly expressed in aerial tissues including leaves, stems, flowers and siliques. Accumulates in both guard cells and mesophyll cells.

It is found in the plastid. Its subcellular location is the chloroplast stroma. It localises to the cell membrane. The enzyme catalyses hydrogencarbonate + H(+) = CO2 + H2O. In terms of biological role, reversible hydration of carbon dioxide. Required for photosynthesis in cotyledons. Binds salicylic acid. Together with BCA4, involved in the CO(2) signaling pathway which controls gas-exchange between plants and the atmosphere by modulating stomatal development and movements. Promotes water use efficiency. The sequence is that of Beta carbonic anhydrase 1, chloroplastic from Arabidopsis thaliana (Mouse-ear cress).